The following is a 580-amino-acid chain: MIVRSLPAALRACARLQPHDPAFTFMDYEQDWDGVAITLTWSQLYRRTLNVARELSRCGSTGDRVVISAPQGLEYVVAFLGALQAGRIAVPLSVPQGGVTDERSDSVLSDSSPVAILTTSSAVDDVVQHVARRPGESPPSIIEVDLLDLDAPNGYTFKEDEYPSTAYLQYTSGSTRTPAGVVMSHQNVRVNFEQLMSGYFADTDGIPPPNSALVSWLPFYHDMGLVIGICAPILGGYPAVLTSPVSFLQRPARWMHLMASDFHAFSAAPNFAFELAARRTTDDDMAGRDLGNILTILSGSERVQAATIKRFADRFARFNLQERVIRPSYGLAEATVYVATSKPGQPPETVDFDTESLSAGHAKPCAGGGATSLISYMLPRSPIVRIVDSDTCIECPDGTVGEIWVHGDNVANGYWQKPDESERTFGGKIVTPSPGTPEGPWLRTGDSGFVTDGKMFIIGRIKDLLIVYGRNHSPDDIEATIQEITRGRCAAISVPGDRSTEKLVAIIELKKRGDSDQDAMARLGAIKREVTSALSSSHGLSVADLVLVAPGSIPITTSGKVRRGACVEQYRQDQFARLDA.

Residues 421–440 are disordered; the sequence is SERTFGGKIVTPSPGTPEGP.

This sequence belongs to the ATP-dependent AMP-binding enzyme family.

It carries out the reaction holo-[mycocerosate synthase] + a long-chain fatty acid + ATP = a long-chain fatty acyl-[mycocerosate synthase] + AMP + diphosphate. The enzyme catalyses a long-chain fatty acid + ATP + H(+) = a long-chain fatty acyl-AMP + diphosphate. The catalysed reaction is holo-[mycocerosate synthase] + a long-chain fatty acyl-AMP = a long-chain fatty acyl-[mycocerosate synthase] + AMP + H(+). The protein operates within lipid metabolism; fatty acid biosynthesis. Involved in the biosynthesis of phthiocerol dimycocerosate (PDIM), a cell wall-associated lipid found only in pathogenic mycobacteria. Catalyzes the activation of long-chain fatty acids as acyl-adenylates (acyl-AMP), which are then transferred to the multifunctional polyketide synthase Mas for further chain extension. The chain is Long-chain-fatty-acid--AMP ligase FadD28 (fadD28) from Mycobacterium bovis (strain ATCC BAA-935 / AF2122/97).